The following is a 407-amino-acid chain: Tyrosine--tRNA ligase (407 aa).

Tyrosine 36 contacts L-tyrosine. Positions 41 to 50 (PTADSLHIGH) match the 'HIGH' region motif. 2 residues coordinate L-tyrosine: tyrosine 169 and glutamine 173. The 'KMSKS' region signature appears at 229 to 233 (KMGKT). Lysine 232 contacts ATP. Residues 341 to 407 (KGILDILVET…KKSYNRIVIE (67 aa)) enclose the S4 RNA-binding domain.

It belongs to the class-I aminoacyl-tRNA synthetase family. TyrS type 1 subfamily. As to quaternary structure, homodimer.

Its subcellular location is the cytoplasm. The catalysed reaction is tRNA(Tyr) + L-tyrosine + ATP = L-tyrosyl-tRNA(Tyr) + AMP + diphosphate + H(+). In terms of biological role, catalyzes the attachment of tyrosine to tRNA(Tyr) in a two-step reaction: tyrosine is first activated by ATP to form Tyr-AMP and then transferred to the acceptor end of tRNA(Tyr). This chain is Tyrosine--tRNA ligase, found in Clostridium tetani (strain Massachusetts / E88).